We begin with the raw amino-acid sequence, 473 residues long: Serine palmitoyltransferase 1 (473 aa).

Topologically, residues 1-15 (MATVAEQWVLVEMVQ) are lumenal. The tract at residues 1–66 (MATVAEQWVL…KEELIEEWQP (66 aa)) is interaction with SPTLC2. The helical transmembrane segment at 16–36 (ALYEAPAYHLILEGILILWII) threads the bilayer. Residues 37-473 (RLLFSKTYKL…ISEVAQTVLL (437 aa)) lie on the Cytoplasmic side of the membrane. Tyrosine 164 is modified (phosphotyrosine; by ABL).

The protein belongs to the class-II pyridoxal-phosphate-dependent aminotransferase family. Component of the serine palmitoyltransferase (SPT) complex, which is also composed of SPTLC2 or SPTLC3 and SPTSSA or SPTSSB. The heterodimer with SPTLC2 or SPTLC3 forms the catalytic core of the enzyme, while SPTSSA or SPTSSB subunits determine substrate specificity. SPT also interacts with ORMDL proteins, especially ORMDL3, which negatively regulate SPT activity in the presence of ceramides. Forms dimers of heterodimers with SPTLC2. Interacts with RTN4. Requires pyridoxal 5'-phosphate as cofactor. In terms of processing, phosphorylation at Tyr-164 inhibits activity and promotes cell survival.

The protein resides in the endoplasmic reticulum membrane. The catalysed reaction is L-serine + hexadecanoyl-CoA + H(+) = 3-oxosphinganine + CO2 + CoA. The enzyme catalyses octadecanoyl-CoA + L-serine + H(+) = 3-oxoeicosasphinganine + CO2 + CoA. It catalyses the reaction tetradecanoyl-CoA + L-serine + H(+) = 3-oxohexadecasphinganine + CO2 + CoA. It carries out the reaction dodecanoyl-CoA + L-serine + H(+) = 3-oxotetradecasphinganine + CO2 + CoA. It participates in lipid metabolism; sphingolipid metabolism. Its activity is regulated as follows. SPT complex catalytic activity is negatively regulated by ORMDL proteins, including ORMDL3, in the presence of ceramides. This mechanism allows to maintain ceramide levels at sufficient concentrations for the production of complex sphingolipids, but which prevents the accumulation of ceramides to levels that trigger apoptosis. In terms of biological role, component of the serine palmitoyltransferase multisubunit enzyme (SPT) that catalyzes the initial and rate-limiting step in sphingolipid biosynthesis by condensing L-serine and activated acyl-CoA (most commonly palmitoyl-CoA) to form long-chain bases. The SPT complex is also composed of SPTLC2 or SPTLC3 and SPTSSA or SPTSSB. Within this complex, the heterodimer with SPTLC2 or SPTLC3 forms the catalytic core. The composition of the serine palmitoyltransferase (SPT) complex determines the substrate preference. The SPTLC1-SPTLC2-SPTSSA complex shows a strong preference for C16-CoA substrate, while the SPTLC1-SPTLC3-SPTSSA isozyme uses both C14-CoA and C16-CoA as substrates, with a slight preference for C14-CoA. The SPTLC1-SPTLC2-SPTSSB complex shows a strong preference for C18-CoA substrate, while the SPTLC1-SPTLC3-SPTSSB isozyme displays an ability to use a broader range of acyl-CoAs, without apparent preference. Required for adipocyte cell viability and metabolic homeostasis. The chain is Serine palmitoyltransferase 1 (SPTLC1) from Bos taurus (Bovine).